The chain runs to 357 residues: Thiamine thiazole synthase 3, chloroplastic (357 aa).

The transit peptide at 1–51 directs the protein to the chloroplast; it reads MSISAAGVATGLGANVELKSNVGSSSSSVAGVRLFTSRKAQLRRCAAPATS. Residues alanine 103, 123–124, glycine 131, and alanine 196 contribute to the substrate site; that span reads EQ. Position 225 is a 2,3-didehydroalanine (Cys) (cysteine 225). Substrate contacts are provided by residues aspartate 227, histidine 242, methionine 294, and 304 to 306; that span reads RMG.

Belongs to the THI4 family. Homooctamer. Fe cation serves as cofactor. Post-translationally, during the catalytic reaction, a sulfide is transferred from Cys-225 to a reaction intermediate, generating a dehydroalanine residue.

The protein localises to the plastid. It is found in the chloroplast. The catalysed reaction is [ADP-thiazole synthase]-L-cysteine + glycine + NAD(+) = [ADP-thiazole synthase]-dehydroalanine + ADP-5-ethyl-4-methylthiazole-2-carboxylate + nicotinamide + 3 H2O + 2 H(+). Involved in biosynthesis of the thiamine precursor thiazole. Catalyzes the conversion of NAD and glycine to adenosine diphosphate 5-(2-hydroxyethyl)-4-methylthiazole-2-carboxylic acid (ADT), an adenylated thiazole intermediate. The reaction includes an iron-dependent sulfide transfer from a conserved cysteine residue of the protein to a thiazole intermediate. The enzyme can only undergo a single turnover, which suggests it is a suicide enzyme. May have additional roles in adaptation to various stress conditions and in DNA damage tolerance. This Physcomitrium patens (Spreading-leaved earth moss) protein is Thiamine thiazole synthase 3, chloroplastic.